A 1144-amino-acid polypeptide reads, in one-letter code: Adenylate cyclase type 3 (1144 aa).

Topologically, residues 1–79 (MTEDQGFSDP…FKRQRHETLL (79 aa)) are cytoplasmic. The next 5 membrane-spanning stretches (helical) occupy residues 80–100 (VLVV…AVVF), 105–125 (LAPL…FVLC), 139–159 (VPYL…GLNF), 173–193 (AFFV…IVII), and 226–246 (ILAN…SYYM). Residues D324, I325, and D368 each coordinate Mg(2+). ATP contacts are provided by residues 324–329 (DIVGFT) and 366–368 (LGD). A helical membrane pass occupies residues 381–401 (EDHAVCSILMGLAMVEAISYV). Residues 402–630 (REKTKTGVDM…RYSVEKEKQS (229 aa)) lie on the Cytoplasmic side of the membrane. R412 provides a ligand contact to ATP. Residue K465 forms a Glycyl lysine isopeptide (Lys-Gly) (interchain with G-Cter in SUMO3) linkage. Positions 504 to 563 (QNGLNGSALPNGAPASKPSSPALIETKEPNGSAHASGSTSEEAEEQEAQADNPSFPNPRR) are disordered. Residue S523 is modified to Phosphoserine. Residues 534 to 543 (GSAHASGSTS) show a composition bias toward low complexity. At S578 the chain carries Phosphoserine. A run of 3 helical transmembrane segments spans residues 631 to 651 (GAAF…EILI), 662 to 682 (FVVG…AIFP), and 706 to 726 (WAML…LSCL). A glycan (N-linked (GlcNAc...) asparagine) is linked at N734. 3 helical membrane passes run 755-775 (VAVL…MVKL), 777-797 (LMLL…CPVF), and 833-853 (LPLV…MLSF). Residues 854–1144 (YYFSRHVEKL…TLPHQVVDNP (291 aa)) are Cytoplasmic-facing. ATP-binding positions include K975, 1062–1064 (DIW), and 1069–1073 (NVASR). Position 1076 is a phosphoserine; by CaMK2 (S1076). Position 1109 (K1109) interacts with ATP.

The protein belongs to the adenylyl cyclase class-4/guanylyl cyclase family. It depends on Mg(2+) as a cofactor. The cofactor is Mn(2+). Post-translationally, N-glycosylated. Sumoylated. Sumoylation is required for targeting ot olfactory cilia. In terms of processing, rapidly phosphorylated after stimulation by odorants or forskolin. Phosphorylation by CaMK2 at Ser-1076 down-regulates enzyme activity. As to expression, detected on cilia on the olfactory epithelium (at protein level). Detected on cilia on the olfactory epithelium.

The protein resides in the cell membrane. Its subcellular location is the golgi apparatus. It localises to the cell projection. It is found in the cilium. The protein localises to the cytoplasm. It carries out the reaction ATP = 3',5'-cyclic AMP + diphosphate. Its activity is regulated as follows. Specifically activated by the G alpha protein GNAL/G(olf) in signaling cascades triggered by odorant receptors. Activated by forskolin. After forskolin treatment, activity is further increased by calcium/calmodulin. In the absence of forskolin, calcium/calmodulin has little effect on enzyme activity. In terms of biological role, catalyzes the formation of the signaling molecule cAMP in response to G-protein signaling. Participates in signaling cascades triggered by odorant receptors via its function in cAMP biosynthesis: specifically activated by G alpha protein GNAL/G(olf) in olfactory epithelium. Required for the perception of odorants. Required for normal sperm motility and normal male fertility. Plays a role in regulating insulin levels and body fat accumulation in response to a high fat diet. This chain is Adenylate cyclase type 3, found in Rattus norvegicus (Rat).